A 739-amino-acid chain; its full sequence is RNA-directed RNA polymerase (739 aa).

The RdRp catalytic domain occupies 452–567; it reads PCFVGLDASR…YLEKEDLPKL (116 aa).

The protein belongs to the tombusviridae RNA polymerase family.

The enzyme catalyses RNA(n) + a ribonucleoside 5'-triphosphate = RNA(n+1) + diphosphate. RNA-dependent RNA polymerase that plays an essential role in the virus replication. This is RNA-directed RNA polymerase from Pothos latent virus (isolate Pigeonpea/India) (PoLV).